The primary structure comprises 110 residues: uncharacterized protein (110 aa).

This is an uncharacterized protein from Homo sapiens (Human).